A 363-amino-acid polypeptide reads, in one-letter code: Galactokinase (363 aa).

Residue 16-19 participates in substrate binding; the sequence is EHTD. Residues serine 50 and 103 to 109 contribute to the ATP site; that span reads GSGLSSS. Mg(2+) is bound by residues serine 109 and glutamate 141. Catalysis depends on aspartate 153, which acts as the Proton acceptor. Tyrosine 205 provides a ligand contact to substrate.

It belongs to the GHMP kinase family. GalK subfamily.

The protein localises to the cytoplasm. It carries out the reaction alpha-D-galactose + ATP = alpha-D-galactose 1-phosphate + ADP + H(+). It functions in the pathway carbohydrate metabolism; galactose metabolism. Its function is as follows. Catalyzes the transfer of the gamma-phosphate of ATP to D-galactose to form alpha-D-galactose-1-phosphate (Gal-1-P). In Mycobacterium bovis (strain ATCC BAA-935 / AF2122/97), this protein is Galactokinase.